A 48-amino-acid chain; its full sequence is Osteocalcin (48 aa).

A Gla domain is found at S1–G46. E16, E20, E23, and D29 together coordinate Ca(2+). 4-carboxyglutamate occurs at positions 16, 20, and 23. Cysteines 22 and 28 form a disulfide.

Belongs to the osteocalcin/matrix Gla protein family. Gamma-carboxyglutamate residues are formed by vitamin K dependent carboxylation by GGCX. These residues are essential for the binding of calcium.

It is found in the secreted. In terms of biological role, the carboxylated form is one of the main organic components of the bone matrix, which constitutes 1-2% of the total bone protein. The carboxylated form binds strongly to apatite and calcium. The protein is Osteocalcin (BGLAP) of Dromaius novaehollandiae (Emu).